Consider the following 575-residue polypeptide: Epsin-1 (575 aa).

Lys-11, Arg-25, Asn-30, Arg-63, and His-73 together coordinate a 1,2-diacyl-sn-glycero-3-phospho-(1D-myo-inositol-4,5-bisphosphate). An ENTH domain is found at 12–144 (NIVHNYSEAE…RDEDRLREER (133 aa)). The tract at residues 150–186 (TKEKLAQTATASSAAVGSGPPPEAEQAWPQSSGEEEL) is disordered. The segment covering 157–167 (TATASSAAVGS) has biased composition (low complexity). 3 consecutive UIM domains span residues 183–202 (EEEL…ADQP), 208–227 (EDDV…HDKE), and 233–252 (GDDL…TGGK). Positions 264-575 (FTTPAPPQAS…PAPNTNPFLL (312 aa)) are disordered. Tandem repeats lie at residues 274–276 (DPW), 294–296 (DPW), 306–308 (DPW), 319–321 (DPW), 332–334 (DPW), 349–351 (DPW), 367–369 (DPW), and 377–379 (DPW). The interval 274–379 (DPWGGPASVP…APAPAFSDPW (106 aa)) is 8 X 3 AA repeats of D-P-W. 2 stretches are compositionally biased toward low complexity: residues 279–299 (PASV…WGGP) and 306–316 (DPWGGAAPTPA). Positions 332-346 (DPWGGTPAPAAGEGP) are enriched in low complexity. The segment covering 367–379 (DPWAPAPAFSDPW) has biased composition (low complexity). Residue Ser-382 is modified to Phosphoserine. Positions 401-410 (DEFSDFDRLR) match the [DE]-X(1,2)-F-X-X-[FL]-X-X-X-R motif motif. Phosphoserine occurs at positions 418 and 419. At Thr-420 the chain carries Phosphothreonine. Phosphoserine is present on residues Ser-434, Ser-446, and Ser-453. The segment covering 453-467 (SPPPAATPTPTPPTR) has biased composition (pro residues). Phosphothreonine occurs at positions 459, 463, and 469. Ser-472 is modified (phosphoserine). Thr-493 bears the Phosphothreonine mark. 2 tandem repeats follow at residues 501–503 (NPF) and 517–519 (NPF). Residues 501-573 (NPFLPSGAPP…GPPAPNTNPF (73 aa)) form a 3 X 3 AA repeats of N-P-F region. The residue at position 533 (Arg-533) is an Omega-N-methylarginine. Residues 556 to 569 (GLPPMMPPGPPAPN) are compositionally biased toward pro residues. The stretch at 571-573 (NPF) is repeat 3.

Belongs to the epsin family. As to quaternary structure, monomer. Binds clathrin and ZBTB16/ZNF145. Binds ubiquitinated proteins. Interacts with RALBP1 in a complex also containing NUMB and TFAP2A during interphase and mitosis. Interacts with AP2B1. Interacts with UBQLN2. Interacts with ITSN1. Interacts with AP2A1 and AP2A2. Interacts with REPS2; the interaction is direct. Interacts with EPS15; the interaction is direct. Interacts with ENTREP1. In terms of processing, phosphorylated on serine and/or threonine residues in mitotic cells. Phosphorylation reduces interaction with REPS2, AP-2 and the membrane fraction. Depolarization of synaptosomes results in dephosphorylation. Ubiquitinated.

It is found in the cytoplasm. The protein resides in the cell membrane. Its subcellular location is the nucleus. It localises to the membrane. The protein localises to the clathrin-coated pit. Its function is as follows. Binds to membranes enriched in phosphatidylinositol 4,5-bisphosphate (PtdIns(4,5)P2). Modifies membrane curvature and facilitates the formation of clathrin-coated invaginations. Regulates receptor-mediated endocytosis. The chain is Epsin-1 (Epn1) from Mus musculus (Mouse).